Reading from the N-terminus, the 324-residue chain is Glutathione synthetase (324 aa).

An ATP-grasp domain is found at Lys-129–Val-313. An ATP-binding site is contributed by Val-155 to Gly-211. Residues Glu-284 and Asn-286 each contribute to the Mg(2+) site.

It belongs to the prokaryotic GSH synthase family. Mg(2+) is required as a cofactor. It depends on Mn(2+) as a cofactor.

It carries out the reaction gamma-L-glutamyl-L-cysteine + glycine + ATP = glutathione + ADP + phosphate + H(+). The protein operates within sulfur metabolism; glutathione biosynthesis; glutathione from L-cysteine and L-glutamate: step 2/2. This is Glutathione synthetase from Gloeobacter violaceus (strain ATCC 29082 / PCC 7421).